The chain runs to 263 residues: Small ribosomal subunit protein eS4 (263 aa).

The S4 RNA-binding domain maps to 42 to 104; the sequence is LPLIIFLRNR…TGEHFRLVYD (63 aa).

The protein belongs to the eukaryotic ribosomal protein eS4 family. Component of the small ribosomal subunit.

It localises to the cytoplasm. Functionally, component of the small ribosomal subunit. The ribosome is a large ribonucleoprotein complex responsible for the synthesis of proteins in the cell. This is Small ribosomal subunit protein eS4 (rps4) from Xenopus tropicalis (Western clawed frog).